The sequence spans 170 residues: uncharacterized protein (170 aa).

Residues 35 to 57 (EEVMPATAPSTDPAVPKDAQEAD) form a disordered region.

This is an uncharacterized protein from Candida tsukubaensis (Yeast).